Consider the following 250-residue polypeptide: LexA repressor (250 aa).

Positions 1–21 (MTSQERGTRRGDTRGNVRDFP) are enriched in basic and acidic residues. The tract at residues 1–33 (MTSQERGTRRGDTRGNVRDFPDSPADASGLTQR) is disordered. Residues 54–74 (VREIGEAVGLTSTSSVAHQLK) constitute a DNA-binding region (H-T-H motif). Catalysis depends on for autocatalytic cleavage activity residues Ser174 and Lys211.

This sequence belongs to the peptidase S24 family. As to quaternary structure, homodimer.

The catalysed reaction is Hydrolysis of Ala-|-Gly bond in repressor LexA.. In terms of biological role, represses a number of genes involved in the response to DNA damage (SOS response), including recA and lexA. In the presence of single-stranded DNA, RecA interacts with LexA causing an autocatalytic cleavage which disrupts the DNA-binding part of LexA, leading to derepression of the SOS regulon and eventually DNA repair. The polypeptide is LexA repressor (Parafrankia sp. (strain EAN1pec)).